We begin with the raw amino-acid sequence, 448 residues long: Protein chibby homolog 2 (448 aa).

Phosphoserine is present on residues S41, S86, S89, S97, S124, S144, S148, and S150. A coiled-coil region spans residues 163–198; that stretch reads AKEFVLQEENKSLREENKALREENRMLRKENKILQV. Positions 206–226 are disordered; sequence SLGREESRPPSPLPQKDSASL. Phosphoserine is present on residues S212 and S225. A coiled-coil region spans residues 242-267; the sequence is KEDSTLQLLREENRALQQLLEQKQAY. Residues 270 to 321 are disordered; the sequence is QTEDAAAPAEESKPAPSPHEEPCSPGLLQDQGSGLSSHFEEPRGPPAPQEDS. Basic and acidic residues predominate over residues 279–291; sequence EESKPAPSPHEEP. Phosphoserine is present on residues S335 and S338. Positions 356–414 form a coiled coil; the sequence is LQLLREMRQALQALLKENRLLQEENRTLQVLRAEHRGFQEENKALWENNKLKLQQKLVI.

This sequence belongs to the chibby family. SPERT subfamily. Homodimer. Binds to NEK1.

The polypeptide is Protein chibby homolog 2 (CBY2) (Macaca fascicularis (Crab-eating macaque)).